Consider the following 429-residue polypeptide: UPF0597 protein AHA_1619 (429 aa).

The protein belongs to the UPF0597 family.

The sequence is that of UPF0597 protein AHA_1619 from Aeromonas hydrophila subsp. hydrophila (strain ATCC 7966 / DSM 30187 / BCRC 13018 / CCUG 14551 / JCM 1027 / KCTC 2358 / NCIMB 9240 / NCTC 8049).